A 289-amino-acid polypeptide reads, in one-letter code: ATP synthase gamma chain (289 aa).

It belongs to the ATPase gamma chain family. F-type ATPases have 2 components, CF(1) - the catalytic core - and CF(0) - the membrane proton channel. CF(1) has five subunits: alpha(3), beta(3), gamma(1), delta(1), epsilon(1). CF(0) has three main subunits: a, b and c.

It localises to the cell inner membrane. Its function is as follows. Produces ATP from ADP in the presence of a proton gradient across the membrane. The gamma chain is believed to be important in regulating ATPase activity and the flow of protons through the CF(0) complex. The chain is ATP synthase gamma chain from Histophilus somni (strain 2336) (Haemophilus somnus).